A 601-amino-acid chain; its full sequence is Elongation factor 4 (601 aa).

One can recognise a tr-type G domain in the interval Ser6 to Glu188. GTP contacts are provided by residues Asp18–Thr23 and Asn135–Asp138.

Belongs to the TRAFAC class translation factor GTPase superfamily. Classic translation factor GTPase family. LepA subfamily.

Its subcellular location is the cell inner membrane. The enzyme catalyses GTP + H2O = GDP + phosphate + H(+). In terms of biological role, required for accurate and efficient protein synthesis under certain stress conditions. May act as a fidelity factor of the translation reaction, by catalyzing a one-codon backward translocation of tRNAs on improperly translocated ribosomes. Back-translocation proceeds from a post-translocation (POST) complex to a pre-translocation (PRE) complex, thus giving elongation factor G a second chance to translocate the tRNAs correctly. Binds to ribosomes in a GTP-dependent manner. This is Elongation factor 4 from Anaeromyxobacter dehalogenans (strain 2CP-C).